We begin with the raw amino-acid sequence, 559 residues long: DnaJ homolog subfamily C member 11 (559 aa).

An N-acetylalanine modification is found at Ala-2. A J domain is found at Asp-14–Gly-82. Position 204 is a phosphoserine (Ser-204). Residues Glu-417–Glu-457 adopt a coiled-coil conformation.

It belongs to the DNAJC11 family. In terms of assembly, associates with the mitochondrial contact site and cristae organizing system (MICOS) complex, composed of at least MICOS10/MIC10, CHCHD3/MIC19, CHCHD6/MIC25, APOOL/MIC27, IMMT/MIC60, APOO/MIC23/MIC26 and QIL1/MIC13. This complex was also known under the names MINOS or MitOS complex. The MICOS complex associates with mitochondrial outer membrane proteins SAMM50, MTX1 and MTX2 (together described as components of the mitochondrial outer membrane sorting assembly machinery (SAM) complex) and DNAJC11, mitochondrial inner membrane protein TMEM11 and with HSPA9. The MICOS and SAM complexes together with DNAJC11 are part of a large protein complex spanning both membranes termed the mitochondrial intermembrane space bridging (MIB) complex.

Its subcellular location is the mitochondrion. The protein resides in the mitochondrion outer membrane. Required for mitochondrial inner membrane organization. Seems to function through its association with the MICOS complex and the mitochondrial outer membrane sorting assembly machinery (SAM) complex. The chain is DnaJ homolog subfamily C member 11 (DNAJC11) from Pongo abelii (Sumatran orangutan).